The chain runs to 303 residues: Putative HTH-type transcriptional regulatory protein Mpal_0031 (303 aa).

One can recognise an HTH cro/C1-type domain in the interval 132–189 (LRGLREQRNMSLGDLGAVLGVSRRTISKYESGMGTTLEIAIKIEEVFDSGVIESIDLL). A DNA-binding region (H-T-H motif) is located at residues 143-162 (LGDLGAVLGVSRRTISKYES).

This chain is Putative HTH-type transcriptional regulatory protein Mpal_0031, found in Methanosphaerula palustris (strain ATCC BAA-1556 / DSM 19958 / E1-9c).